The following is a 404-amino-acid chain: Cysteine desulfurase IscS (404 aa).

Residues 75–76 (AT), asparagine 155, glutamine 183, and 203–205 (SGH) contribute to the pyridoxal 5'-phosphate site. Lysine 206 bears the N6-(pyridoxal phosphate)lysine mark. Pyridoxal 5'-phosphate is bound at residue threonine 243. Catalysis depends on cysteine 328, which acts as the Cysteine persulfide intermediate. Residue cysteine 328 participates in [2Fe-2S] cluster binding.

Belongs to the class-V pyridoxal-phosphate-dependent aminotransferase family. NifS/IscS subfamily. Homodimer. Forms a heterotetramer with IscU, interacts with other sulfur acceptors. It depends on pyridoxal 5'-phosphate as a cofactor.

Its subcellular location is the cytoplasm. It catalyses the reaction (sulfur carrier)-H + L-cysteine = (sulfur carrier)-SH + L-alanine. The protein operates within cofactor biosynthesis; iron-sulfur cluster biosynthesis. Its function is as follows. Master enzyme that delivers sulfur to a number of partners involved in Fe-S cluster assembly, tRNA modification or cofactor biosynthesis. Catalyzes the removal of elemental sulfur and selenium atoms from cysteine and selenocysteine to produce alanine. Functions as a sulfur delivery protein for Fe-S cluster synthesis onto IscU, an Fe-S scaffold assembly protein, as well as other S acceptor proteins. Also functions as a selenium delivery protein in the pathway for the biosynthesis of selenophosphate. The protein is Cysteine desulfurase IscS of Salmonella gallinarum (strain 287/91 / NCTC 13346).